Reading from the N-terminus, the 90-residue chain is MSRTVNCIKLGREAEGLDFPPLPGELGKRVYESVSKEAWQGWLRYQTMLINENRLSLADARARQYLASQLDAYFFGQGADAPAGYTPPQN.

It belongs to the Fe(2+)-trafficking protein family.

Could be a mediator in iron transactions between iron acquisition and iron-requiring processes, such as synthesis and/or repair of Fe-S clusters in biosynthetic enzymes. The polypeptide is Probable Fe(2+)-trafficking protein (Chromobacterium violaceum (strain ATCC 12472 / DSM 30191 / JCM 1249 / CCUG 213 / NBRC 12614 / NCIMB 9131 / NCTC 9757 / MK)).